The chain runs to 201 residues: Probable molybdenum cofactor guanylyltransferase (201 aa).

GTP is bound by residues 16 to 18, Lys28, Asp75, and Asp107; that span reads LAG. Asp107 is a binding site for Mg(2+).

The protein belongs to the MobA family. The cofactor is Mg(2+).

Its subcellular location is the cytoplasm. It catalyses the reaction Mo-molybdopterin + GTP + H(+) = Mo-molybdopterin guanine dinucleotide + diphosphate. In terms of biological role, transfers a GMP moiety from GTP to Mo-molybdopterin (Mo-MPT) cofactor (Moco or molybdenum cofactor) to form Mo-molybdopterin guanine dinucleotide (Mo-MGD) cofactor. In Mycobacterium marinum (strain ATCC BAA-535 / M), this protein is Probable molybdenum cofactor guanylyltransferase.